The sequence spans 518 residues: Lysine 5,6-aminomutase alpha subunit (518 aa).

Pyridoxal 5'-phosphate-binding positions include 184-189 (RTTGQS), serine 238, tyrosine 263, arginine 268, and asparagine 299.

This sequence belongs to the KamD family. In terms of assembly, heterotetramer of 2 alpha and 2 beta subunits. Requires adenosylcob(III)alamin as cofactor. It depends on pyridoxal 5'-phosphate as a cofactor.

The enzyme catalyses (3S)-3,6-diaminohexanoate = (3S,5S)-3,5-diaminohexanoate. It carries out the reaction D-lysine = (2R,5S)-2,5-diaminohexanoate. The protein operates within amino-acid degradation; L-lysine degradation via acetate pathway. In terms of biological role, catalyzes the migration of the L-beta-lysine and D-lysine epsilon amino group to the delta carbon to produce 3,5-diaminohexanoate and 2,5-diaminohexanoate, respectively. This chain is Lysine 5,6-aminomutase alpha subunit, found in Fusobacterium nucleatum subsp. nucleatum (strain ATCC 25586 / DSM 15643 / BCRC 10681 / CIP 101130 / JCM 8532 / KCTC 2640 / LMG 13131 / VPI 4355).